The following is a 304-amino-acid chain: MLLCAVISFIVYAVFLQEANGHAAERADSRKPIWDIAHMVNDLELVDEYLGDGANGLELDVAFTDDGTADKMYHGVPCDCFRSCKRTEGFTKYMDYIRQLTTPGNSKFKSQLILLIMDLKLNGIEPNVAYAAGKSVAEKLLSGYWQNGKSGARAYIVLSLETITRPDFISGFRDAIKASGHEELFEKIGWDFSGNEDLGEIRRVYQKYGIEDHIWQGDGITNCLPRGDYRLTEAMKKKNDPNYKYTLKVYTWSIDKESSIRNALRLGVDAVMTNYPARVKSILRESEFSGTHRMATYDDNPWQK.

The N-terminal stretch at 1–21 is a signal peptide; the sequence is MLLCAVISFIVYAVFLQEANG. A propeptide spanning residues 22 to 26 is cleaved from the precursor; sequence HAAER. Histidine 38 is an active-site residue. Positions 58 and 60 each coordinate Mg(2+). Catalysis depends on histidine 74, which acts as the Nucleophile. Intrachain disulfides connect cysteine 78-cysteine 84 and cysteine 80-cysteine 223. Position 118 (aspartate 118) interacts with Mg(2+).

The protein belongs to the arthropod phospholipase D family. Class II subfamily. It depends on Mg(2+) as a cofactor. Expressed by the venom gland.

It localises to the secreted. It carries out the reaction an N-(acyl)-sphingosylphosphocholine = an N-(acyl)-sphingosyl-1,3-cyclic phosphate + choline. The enzyme catalyses an N-(acyl)-sphingosylphosphoethanolamine = an N-(acyl)-sphingosyl-1,3-cyclic phosphate + ethanolamine. It catalyses the reaction a 1-acyl-sn-glycero-3-phosphocholine = a 1-acyl-sn-glycero-2,3-cyclic phosphate + choline. The catalysed reaction is a 1-acyl-sn-glycero-3-phosphoethanolamine = a 1-acyl-sn-glycero-2,3-cyclic phosphate + ethanolamine. In terms of biological role, dermonecrotic toxins cleave the phosphodiester linkage between the phosphate and headgroup of certain phospholipids (sphingolipid and lysolipid substrates), forming an alcohol (often choline) and a cyclic phosphate. This toxin acts on sphingomyelin (SM) with low activity. It may also act on ceramide phosphoethanolamine (CPE), lysophosphatidylcholine (LPC) and lysophosphatidylethanolamine (LPE), but not on lysophosphatidylserine (LPS), and lysophosphatidylglycerol (LPG). It acts by transphosphatidylation, releasing exclusively cyclic phosphate products as second products. Induces dermonecrosis, hemolysis, increased vascular permeability, edema, inflammatory response, and platelet aggregation. This Loxosceles intermedia (Brown spider) protein is Dermonecrotic toxin LiSicTox-betaIA1ii.